We begin with the raw amino-acid sequence, 492 residues long: Bifunctional purine biosynthesis protein PurH (492 aa).

Residues 1–144 form the MGS-like domain; that stretch reads MKKVILSVSD…KNFKHVTTIV (144 aa).

This sequence belongs to the PurH family.

It carries out the reaction (6R)-10-formyltetrahydrofolate + 5-amino-1-(5-phospho-beta-D-ribosyl)imidazole-4-carboxamide = 5-formamido-1-(5-phospho-D-ribosyl)imidazole-4-carboxamide + (6S)-5,6,7,8-tetrahydrofolate. The catalysed reaction is IMP + H2O = 5-formamido-1-(5-phospho-D-ribosyl)imidazole-4-carboxamide. The protein operates within purine metabolism; IMP biosynthesis via de novo pathway; 5-formamido-1-(5-phospho-D-ribosyl)imidazole-4-carboxamide from 5-amino-1-(5-phospho-D-ribosyl)imidazole-4-carboxamide (10-formyl THF route): step 1/1. Its pathway is purine metabolism; IMP biosynthesis via de novo pathway; IMP from 5-formamido-1-(5-phospho-D-ribosyl)imidazole-4-carboxamide: step 1/1. The sequence is that of Bifunctional purine biosynthesis protein PurH from Staphylococcus carnosus (strain TM300).